We begin with the raw amino-acid sequence, 546 residues long: Chaperonin GroEL 1 (546 aa).

ATP-binding positions include 30–33, K51, 87–91, G415, 479–481, and D495; these read TLGP, DGTTT, and NAA. The disordered stretch occupies residues 526 to 546; it reads KEDAPMPGGMPGGMGGMGMDM. The segment covering 534-546 has biased composition (gly residues); the sequence is GMPGGMGGMGMDM.

It belongs to the chaperonin (HSP60) family. As to quaternary structure, forms a cylinder of 14 subunits composed of two heptameric rings stacked back-to-back. Interacts with the co-chaperonin GroES.

The protein resides in the cytoplasm. The catalysed reaction is ATP + H2O + a folded polypeptide = ADP + phosphate + an unfolded polypeptide.. Functionally, together with its co-chaperonin GroES, plays an essential role in assisting protein folding. The GroEL-GroES system forms a nano-cage that allows encapsulation of the non-native substrate proteins and provides a physical environment optimized to promote and accelerate protein folding. This Burkholderia cenocepacia (strain HI2424) protein is Chaperonin GroEL 1.